Reading from the N-terminus, the 600-residue chain is Glutamine--fructose-6-phosphate aminotransferase [isomerizing] (600 aa).

Cys-2 functions as the Nucleophile; for GATase activity in the catalytic mechanism. A Glutamine amidotransferase type-2 domain is found at 2–217 (CGIVGYIGYQ…DGELVIVTSE (216 aa)). 2 consecutive SIS domains span residues 283-422 (IINE…AKGF) and 452-590 (IASD…VDKP). Lys-595 acts as the For Fru-6P isomerization activity in catalysis.

As to quaternary structure, homodimer.

The protein resides in the cytoplasm. It carries out the reaction D-fructose 6-phosphate + L-glutamine = D-glucosamine 6-phosphate + L-glutamate. Functionally, catalyzes the first step in hexosamine metabolism, converting fructose-6P into glucosamine-6P using glutamine as a nitrogen source. This is Glutamine--fructose-6-phosphate aminotransferase [isomerizing] from Geobacillus kaustophilus (strain HTA426).